The following is a 186-amino-acid chain: Peptidyl-tRNA hydrolase (186 aa).

Tyr-14 contacts tRNA. The Proton acceptor role is filled by His-19. TRNA is bound by residues Phe-64, Asn-66, and Asn-112.

It belongs to the PTH family. In terms of assembly, monomer.

It localises to the cytoplasm. It carries out the reaction an N-acyl-L-alpha-aminoacyl-tRNA + H2O = an N-acyl-L-amino acid + a tRNA + H(+). In terms of biological role, hydrolyzes ribosome-free peptidyl-tRNAs (with 1 or more amino acids incorporated), which drop off the ribosome during protein synthesis, or as a result of ribosome stalling. Catalyzes the release of premature peptidyl moieties from peptidyl-tRNA molecules trapped in stalled 50S ribosomal subunits, and thus maintains levels of free tRNAs and 50S ribosomes. The chain is Peptidyl-tRNA hydrolase from Mycoplasma capricolum subsp. capricolum (strain California kid / ATCC 27343 / NCTC 10154).